Here is a 255-residue protein sequence, read N- to C-terminus: Biotin carboxyl carrier protein of acetyl-CoA carboxylase 2, chloroplastic (255 aa).

Residues 1–87 constitute a chloroplast transit peptide; it reads MASLSVPCVK…TNVPEPAELS (87 aa). Positions 148–193 are disordered; that stretch reads PPAQPVALPPSPTPTSTPATAKPTSAPSSSHPPLKSPMAGTFYRSP. Residues 149-162 show a composition bias toward pro residues; that stretch reads PAQPVALPPSPTPT. The span at 163–180 shows a compositional bias: low complexity; sequence STPATAKPTSAPSSSHPP. The Biotinyl-binding domain maps to 178–254; the sequence is HPPLKSPMAG…SVDTPLFVIA (77 aa). Residue lysine 220 is modified to N6-biotinyllysine.

In terms of assembly, acetyl-CoA carboxylase is a heterohexamer composed of biotin carboxyl carrier protein, biotin carboxylase and 2 subunits each of ACCase subunit alpha and ACCase plastid-coded subunit beta (accD). As to expression, primarily expressed in 7 to 10 days after flowering seeds at levels approximately 2-fold less abundant than BCCP1.

Its subcellular location is the plastid. It is found in the chloroplast. It functions in the pathway lipid metabolism; fatty acid biosynthesis. Its function is as follows. This protein is a component of the acetyl coenzyme A carboxylase complex; first, biotin carboxylase catalyzes the carboxylation of the carrier protein and then the transcarboxylase transfers the carboxyl group to form malonyl-CoA. This chain is Biotin carboxyl carrier protein of acetyl-CoA carboxylase 2, chloroplastic (BCCP2), found in Arabidopsis thaliana (Mouse-ear cress).